Reading from the N-terminus, the 829-residue chain is Cadherin-16 (829 aa).

An N-terminal signal peptide occupies residues 1-18; the sequence is MVPAWLWLLCFSVPQALV. Residues 19–786 lie on the Extracellular side of the membrane; the sequence is EVSPTTLHVE…MKGMPTKLSA (768 aa). 6 Cadherin domains span residues 25-126, 131-235, 242-336, 341-449, 455-564, and 569-665; these read LHVE…VPQF, YSAR…SIVE, EPVH…APVC, PPVS…APEF, GPVS…PPRL, and YEAD…APAL. Residues Asn-517, Asn-602, and Asn-722 are each glycosylated (N-linked (GlcNAc...) asparagine). Residues 666 to 786 are ectodomain G; the sequence is PLAPMPSRHL…MKGMPTKLSA (121 aa). The helical transmembrane segment at 787-807 threads the bilayer; it reads VGILVGTLAAIGFFLILIFTH. Topologically, residues 808–829 are cytoplasmic; the sequence is LALARKKDLDAPADNVPLKAAA.

As to expression, kidney specific. Limited to the basolateral membranes of renal tubular epithelial cells.

It localises to the cell membrane. In terms of biological role, cadherins are calcium-dependent cell adhesion proteins. They preferentially interact with themselves in a homophilic manner in connecting cells; cadherins may thus contribute to the sorting of heterogeneous cell types. This is Cadherin-16 (CDH16) from Oryctolagus cuniculus (Rabbit).